Here is a 140-residue protein sequence, read N- to C-terminus: Putative pre-16S rRNA nuclease (140 aa).

Belongs to the YqgF nuclease family.

It localises to the cytoplasm. Its function is as follows. Could be a nuclease involved in processing of the 5'-end of pre-16S rRNA. The chain is Putative pre-16S rRNA nuclease from Yersinia enterocolitica serotype O:8 / biotype 1B (strain NCTC 13174 / 8081).